Here is a 1024-residue protein sequence, read N- to C-terminus: P3N-PIPO polyprotein (1024 aa).

The region spanning 165 to 308 (RMSEASLQLF…KKQSNEIIHY (144 aa)) is the Peptidase S30 domain. Catalysis depends on for P1 proteinase activity residues H216, D225, and S259. The short motif at 360 to 363 (KITC) is the Involved in interaction with stylet and aphid transmission element. An Involved in virions binding and aphid transmission motif is present at residues 619–621 (PTK). Residues 645 to 767 (MFIAKAGYCY…DSNMKTYLVG (123 aa)) enclose the Peptidase C6 domain. Catalysis depends on for helper component proteinase activity residues C653 and H726.

The protein belongs to the potyviridae P3N-PIPO polyprotein family. In terms of assembly, interacts (via PIPO domain) with host PCaP1 protein; this interaction may help to anchor the movement complex to the plasma membrane from which the complex could move to the plasmodesmata. Potyviral RNA is expressed as two polyproteins which undergo post-translational proteolytic processing. Genome polyprotein is processed by NIa-pro, P1 and HC-pro proteinases resulting in the production of at least ten individual proteins. P3N-PIPO is cleaved by P1 and HC-pro proteinases resulting in the production of three individual proteins. The P1 proteinase and the HC-pro cleave only their respective C-termini autocatalytically.

It is found in the host cell junction. Its subcellular location is the host plasmodesma. The catalysed reaction is Hydrolyzes a Gly-|-Gly bond at its own C-terminus, commonly in the sequence -Tyr-Xaa-Val-Gly-|-Gly, in the processing of the potyviral polyprotein.. Functionally, required for aphid transmission and also has proteolytic activity. Only cleaves a Gly-Gly dipeptide at its own C-terminus. Interacts with virions and aphid stylets. Acts as a suppressor of RNA-mediated gene silencing, also known as post-transcriptional gene silencing (PTGS), a mechanism of plant viral defense that limits the accumulation of viral RNAs. May have RNA-binding activity. Allows efficient cell to cell propagation, by bypassing the host cell wall barrier. Transports viral genome to neighboring plant cells directly through plasmosdesmata, without any budding. This Plum pox potyvirus (strain D) (PPV) protein is P3N-PIPO polyprotein.